A 113-amino-acid polypeptide reads, in one-letter code: UPF0482 protein YnfB (113 aa).

A signal peptide spans 1 to 28 (MKITLSKRIGLLAFLLPCALALSTTVHA).

The protein belongs to the UPF0482 family.

This is UPF0482 protein YnfB from Shigella dysenteriae serotype 1 (strain Sd197).